Reading from the N-terminus, the 648-residue chain is Probable LRR receptor-like serine/threonine-protein kinase At4g30520 (648 aa).

The first 30 residues, 1 to 30 (MVVVTKKTMKIQIHLLYSFLFLCFSTLTLS), serve as a signal peptide directing secretion. At 31–238 (SEPRNPEVEA…SSSGRRSNRL (208 aa)) the chain is on the extracellular side. N-linked (GlcNAc...) asparagine glycans are attached at residues asparagine 99 and asparagine 112. LRR repeat units follow at residues 100-125 (LTNLRQVSLQNNNISGKIPPELGFLP), 127-148 (LQTLDLSNNRFSGDIPVSIDQL), 149-172 (SSLQYLRLNNNSLSGPFPASLSQI), and 174-199 (HLSFLDLSYNNLSGPVPKFPARTFNV). 2 N-linked (GlcNAc...) asparagine glycosylation sites follow: asparagine 158 and asparagine 184. A helical transmembrane segment spans residues 239 to 259 (AIALSVSLGSVVILVLALGSF). The Cytoplasmic segment spans residues 260-648 (CWYRKKQRRL…SFAMELSGPR (389 aa)). Threonine 300 bears the Phosphothreonine mark. The 280-residue stretch at 303 to 582 (FSSKNILGAG…EGDGLAERWA (280 aa)) folds into the Protein kinase domain. Residue 309–317 (LGAGGFGNV) coordinates ATP. Threonine 326 is modified (phosphothreonine). Residue lysine 331 coordinates ATP. A phosphoserine mark is found at serine 384 and serine 387. Aspartate 426 serves as the catalytic Proton acceptor. Residues threonine 459, threonine 460, and threonine 465 each carry the phosphothreonine modification. Residue tyrosine 473 is modified to Phosphotyrosine. Phosphoserine is present on serine 475. Threonine 476 carries the post-translational modification Phosphothreonine. Phosphoserine is present on serine 480. Threonine 555 carries the post-translational modification Phosphothreonine.

It belongs to the protein kinase superfamily. Ser/Thr protein kinase family.

Its subcellular location is the cell membrane. It catalyses the reaction L-seryl-[protein] + ATP = O-phospho-L-seryl-[protein] + ADP + H(+). The enzyme catalyses L-threonyl-[protein] + ATP = O-phospho-L-threonyl-[protein] + ADP + H(+). This chain is Probable LRR receptor-like serine/threonine-protein kinase At4g30520, found in Arabidopsis thaliana (Mouse-ear cress).